We begin with the raw amino-acid sequence, 200 residues long: Large ribosomal subunit protein uL4 (200 aa).

Residues 42-65 (TRAHKSRADVSGGGKKPFRQKGTG) are disordered.

This sequence belongs to the universal ribosomal protein uL4 family. As to quaternary structure, part of the 50S ribosomal subunit.

In terms of biological role, one of the primary rRNA binding proteins, this protein initially binds near the 5'-end of the 23S rRNA. It is important during the early stages of 50S assembly. It makes multiple contacts with different domains of the 23S rRNA in the assembled 50S subunit and ribosome. Forms part of the polypeptide exit tunnel. This is Large ribosomal subunit protein uL4 from Acinetobacter baumannii (strain AB307-0294).